The chain runs to 156 residues: Transcription elongation factor GreA (156 aa).

A coiled-coil region spans residues 2 to 78 (AKEIILTQEG…MISKAKLIED (77 aa)).

This sequence belongs to the GreA/GreB family.

Necessary for efficient RNA polymerase transcription elongation past template-encoded arresting sites. The arresting sites in DNA have the property of trapping a certain fraction of elongating RNA polymerases that pass through, resulting in locked ternary complexes. Cleavage of the nascent transcript by cleavage factors such as GreA or GreB allows the resumption of elongation from the new 3'terminus. GreA releases sequences of 2 to 3 nucleotides. This Mesoplasma florum (strain ATCC 33453 / NBRC 100688 / NCTC 11704 / L1) (Acholeplasma florum) protein is Transcription elongation factor GreA.